The primary structure comprises 356 residues: Homoserine O-acetyltransferase (356 aa).

The region spanning 50 to 335 (NVILVCHALT…DEPYGHDAFL (286 aa)) is the AB hydrolase-1 domain. Serine 146 (nucleophile) is an active-site residue. Arginine 215 is a substrate binding site. Residues aspartate 302 and histidine 331 contribute to the active site. Residue aspartate 332 participates in substrate binding.

The protein belongs to the AB hydrolase superfamily. MetX family. As to quaternary structure, homodimer.

The protein resides in the cytoplasm. The enzyme catalyses L-homoserine + acetyl-CoA = O-acetyl-L-homoserine + CoA. It participates in amino-acid biosynthesis; L-methionine biosynthesis via de novo pathway; O-acetyl-L-homoserine from L-homoserine: step 1/1. In terms of biological role, transfers an acetyl group from acetyl-CoA to L-homoserine, forming acetyl-L-homoserine. The protein is Homoserine O-acetyltransferase of Chlorobaculum parvum (strain DSM 263 / NCIMB 8327) (Chlorobium vibrioforme subsp. thiosulfatophilum).